A 375-amino-acid chain; its full sequence is Protein GOLM2 (375 aa).

At 1 to 12 (MVGFGANRRGGR) the chain is on the cytoplasmic side. Residues 13–33 (LPSFLLAALLLVIAVLAFNCW) form a helical; Signal-anchor for type II membrane protein membrane-spanning segment. Residues 34-198 (NAASRQAVLR…REQKATQRIQ (165 aa)) adopt a coiled-coil conformation. Residues 34–375 (NAASRQAVLR…SKPRFGDGVL (342 aa)) are Lumenal-facing. 3 disordered regions span residues 81–102 (LEQK…DGQV), 193–327 (ATQR…DSQN), and 342–375 (RAVG…DGVL). Composition is skewed to basic and acidic residues over residues 193–204 (ATQRIQSSKDAE) and 350–375 (KQND…DGVL).

The protein belongs to the GOLM family.

It localises to the membrane. The polypeptide is Protein GOLM2 (GOLM2) (Gallus gallus (Chicken)).